We begin with the raw amino-acid sequence, 157 residues long: Ribosomal RNA large subunit methyltransferase H (157 aa).

S-adenosyl-L-methionine contacts are provided by residues leucine 74, glycine 106, and 125-130 (LGNITF).

The protein belongs to the RNA methyltransferase RlmH family. In terms of assembly, homodimer.

It is found in the cytoplasm. It catalyses the reaction pseudouridine(1915) in 23S rRNA + S-adenosyl-L-methionine = N(3)-methylpseudouridine(1915) in 23S rRNA + S-adenosyl-L-homocysteine + H(+). Its function is as follows. Specifically methylates the pseudouridine at position 1915 (m3Psi1915) in 23S rRNA. The polypeptide is Ribosomal RNA large subunit methyltransferase H (Lawsonia intracellularis (strain PHE/MN1-00)).